Here is a 495-residue protein sequence, read N- to C-terminus: tRNA-guanine(15) transglycosylase (495 aa).

Residue aspartate 83 is the Nucleophile of the active site. Aspartate 118 serves as a coordination point for substrate. Zn(2+)-binding residues include cysteine 273 and cysteine 278.

The protein belongs to the archaeosine tRNA-ribosyltransferase family. Zn(2+) serves as cofactor.

It catalyses the reaction guanosine(15) in tRNA + 7-cyano-7-deazaguanine = 7-cyano-7-carbaguanosine(15) in tRNA + guanine. The protein operates within tRNA modification; archaeosine-tRNA biosynthesis. Functionally, exchanges the guanine residue with 7-cyano-7-deazaguanine (preQ0) at position 15 in the dihydrouridine loop (D-loop) of archaeal tRNAs. This is tRNA-guanine(15) transglycosylase from Pyrobaculum aerophilum (strain ATCC 51768 / DSM 7523 / JCM 9630 / CIP 104966 / NBRC 100827 / IM2).